The primary structure comprises 154 residues: UPF0178 protein H16_B0290 (154 aa).

This sequence belongs to the UPF0178 family.

The protein is UPF0178 protein H16_B0290 of Cupriavidus necator (strain ATCC 17699 / DSM 428 / KCTC 22496 / NCIMB 10442 / H16 / Stanier 337) (Ralstonia eutropha).